Consider the following 413-residue polypeptide: Methylaspartate ammonia-lyase (413 aa).

Glutamine 172 serves as a coordination point for (2S,3S)-3-methyl-L-aspartate. Mg(2+) is bound by residues aspartate 238, glutamate 273, and aspartate 307. Position 329 (glutamine 329) interacts with (2S,3S)-3-methyl-L-aspartate. The Proton acceptor role is filled by lysine 331. (2S,3S)-3-methyl-L-aspartate contacts are provided by residues 360–361 and cysteine 361; that span reads TC.

It belongs to the methylaspartate ammonia-lyase family. As to quaternary structure, homodimer. Mg(2+) is required as a cofactor.

It carries out the reaction (2S,3S)-3-methyl-L-aspartate = mesaconate + NH4(+). The protein operates within amino-acid degradation; L-glutamate degradation via mesaconate pathway; acetate and pyruvate from L-glutamate: step 2/4. With respect to regulation, inhibited by calcium ions. In terms of biological role, involved in the methylaspartate cycle. Catalyzes the formation of the alpha,beta-unsaturated bond by the reversible anti elimination of ammonia from L-threo-beta-methylaspartate (L-threo-(2S,3S)-3-methylaspartate) to give mesaconate. It can also use L-erythro-beta-methylaspartate (L-erythro-(2S,3R)-3-methylaspartate), L-aspartate, fumarate and ethylfumarate as substrates. This is Methylaspartate ammonia-lyase from Clostridium tetanomorphum.